Consider the following 444-residue polypeptide: RAC family serine/threonine-protein kinase homolog (444 aa).

The 96-residue stretch at 5–100 folds into the PH domain; sequence PIKHEGFLTK…WIEILINERE (96 aa). The Protein kinase domain occupies 120 to 374; it reads FELLNLVGKG…PNLIKRHPFF (255 aa). ATP is bound by residues 126 to 134 and lysine 149; that span reads VGKGSFGKV. Aspartate 243 acts as the Proton acceptor in catalysis. Threonine 278 is subject to Phosphothreonine. Residues 375-444 enclose the AGC-kinase C-terminal domain; that stretch reads RSIDWEQLFQ…TYVAESEHLR (70 aa).

Belongs to the protein kinase superfamily. AGC Ser/Thr protein kinase family. RAC subfamily.

It carries out the reaction L-seryl-[protein] + ATP = O-phospho-L-seryl-[protein] + ADP + H(+). It catalyses the reaction L-threonyl-[protein] + ATP = O-phospho-L-threonyl-[protein] + ADP + H(+). In terms of biological role, predominantly involved during the aggregation to control cell polarity and chemotaxis. Phosphorylates talB, gefN, gefS, PI4P 5-kinase and gacQ. This chain is RAC family serine/threonine-protein kinase homolog (pkbA), found in Dictyostelium discoideum (Social amoeba).